The sequence spans 84 residues: Transcriptional regulator WhiB1 (84 aa).

Residues 8–70 (VCRDEDPELF…GGMSEDERRA (63 aa)) enclose the 4Fe-4S Wbl-type domain. [4Fe-4S] cluster-binding residues include Cys-9, Cys-37, Cys-40, and Cys-46.

The protein belongs to the WhiB family. In terms of assembly, homodimer. The cofactor is [4Fe-4S] cluster. In terms of processing, the Fe-S cluster can be nitrosylated by nitric oxide (NO). Upon Fe-S cluster removal intramolecular disulfide bonds are formed.

The protein localises to the cytoplasm. Functionally, acts as a transcriptional regulator. Probably redox-responsive. The apo- but not holo-form probably binds DNA. The polypeptide is Transcriptional regulator WhiB1 (whiB1) (Mycobacterium tuberculosis (strain CDC 1551 / Oshkosh)).